The following is a 188-amino-acid chain: Peptidyl-tRNA hydrolase (188 aa).

Residue tyrosine 14 participates in tRNA binding. The active-site Proton acceptor is histidine 19. TRNA-binding residues include tyrosine 64, asparagine 66, and asparagine 112.

This sequence belongs to the PTH family. Monomer.

The protein localises to the cytoplasm. The enzyme catalyses an N-acyl-L-alpha-aminoacyl-tRNA + H2O = an N-acyl-L-amino acid + a tRNA + H(+). Functionally, hydrolyzes ribosome-free peptidyl-tRNAs (with 1 or more amino acids incorporated), which drop off the ribosome during protein synthesis, or as a result of ribosome stalling. Catalyzes the release of premature peptidyl moieties from peptidyl-tRNA molecules trapped in stalled 50S ribosomal subunits, and thus maintains levels of free tRNAs and 50S ribosomes. The protein is Peptidyl-tRNA hydrolase of Leuconostoc mesenteroides subsp. mesenteroides (strain ATCC 8293 / DSM 20343 / BCRC 11652 / CCM 1803 / JCM 6124 / NCDO 523 / NBRC 100496 / NCIMB 8023 / NCTC 12954 / NRRL B-1118 / 37Y).